Reading from the N-terminus, the 125-residue chain is uncharacterized protein (125 aa).

A helical transmembrane segment spans residues 7–29 (NCMFLYVYTDVCVRLCASIFYIM).

Its subcellular location is the membrane. This is an uncharacterized protein from Saccharomyces cerevisiae (strain ATCC 204508 / S288c) (Baker's yeast).